Here is a 275-residue protein sequence, read N- to C-terminus: Large ribosomal subunit protein uL2 (275 aa).

The interval 222–275 (GKVMNPVDHPHGGGEGRNPIGRNPSTPWGKLAMGVKTRGNKKSDRLIVKRRNKK) is disordered.

This sequence belongs to the universal ribosomal protein uL2 family. As to quaternary structure, part of the 50S ribosomal subunit. Forms a bridge to the 30S subunit in the 70S ribosome.

Functionally, one of the primary rRNA binding proteins. Required for association of the 30S and 50S subunits to form the 70S ribosome, for tRNA binding and peptide bond formation. It has been suggested to have peptidyltransferase activity; this is somewhat controversial. Makes several contacts with the 16S rRNA in the 70S ribosome. The chain is Large ribosomal subunit protein uL2 from Desulforamulus reducens (strain ATCC BAA-1160 / DSM 100696 / MI-1) (Desulfotomaculum reducens).